The following is a 1407-amino-acid chain: DNA-directed RNA polymerase subunit beta' (1407 aa).

The Zn(2+) site is built by Cys-70, Cys-72, Cys-85, and Cys-88. Mg(2+) is bound by residues Asp-460, Asp-462, and Asp-464. Zn(2+) is bound by residues Cys-814, Cys-889, Cys-896, and Cys-899. The interval 1384 to 1407 (LVGRSTSSGTEVTSPSKDAIPLGG) is disordered. A compositionally biased stretch (polar residues) spans 1386–1399 (GRSTSSGTEVTSPS).

The protein belongs to the RNA polymerase beta' chain family. As to quaternary structure, the RNAP catalytic core consists of 2 alpha, 1 beta, 1 beta' and 1 omega subunit. When a sigma factor is associated with the core the holoenzyme is formed, which can initiate transcription. Mg(2+) is required as a cofactor. It depends on Zn(2+) as a cofactor.

The catalysed reaction is RNA(n) + a ribonucleoside 5'-triphosphate = RNA(n+1) + diphosphate. Functionally, DNA-dependent RNA polymerase catalyzes the transcription of DNA into RNA using the four ribonucleoside triphosphates as substrates. The polypeptide is DNA-directed RNA polymerase subunit beta' (Xylella fastidiosa (strain Temecula1 / ATCC 700964)).